We begin with the raw amino-acid sequence, 465 residues long: Lactaldehyde dehydrogenase (465 aa).

220 to 225 (GSVEVG) contacts NAD(+). Catalysis depends on residues glutamate 240 and cysteine 274.

Belongs to the aldehyde dehydrogenase family. In terms of assembly, homotetramer.

It carries out the reaction (S)-lactaldehyde + NAD(+) + H2O = (S)-lactate + NADH + 2 H(+). It functions in the pathway cofactor biosynthesis; coenzyme F420 biosynthesis. Its function is as follows. Involved in F420 biosynthesis through the oxidation of lactaldehyde to lactate. In Methanococcus vannielii (strain ATCC 35089 / DSM 1224 / JCM 13029 / OCM 148 / SB), this protein is Lactaldehyde dehydrogenase.